A 270-amino-acid chain; its full sequence is Phosphodiesterase YaeI (270 aa).

6 residues coordinate a divalent metal cation: Asp56, His58, Asp88, Asn120, His209, and His211.

This sequence belongs to the metallophosphoesterase superfamily. It depends on a divalent metal cation as a cofactor.

Shows phosphodiesterase activity, hydrolyzing phosphodiester bond in the artificial chromogenic substrate bis-p-nitrophenyl phosphate (bis-pNPP). In Escherichia coli (strain K12), this protein is Phosphodiesterase YaeI (yaeI).